Reading from the N-terminus, the 152-residue chain is Probable flagellum biosynthesis repressor protein FlbT (152 aa).

It belongs to the FlbT family.

Its function is as follows. Has a post-transcriptional repressor function in flagellum biogenesis. Associates with the 5'-UTR of fljK mRNA and promotes its degradation. The sequence is that of Probable flagellum biosynthesis repressor protein FlbT from Brucella canis (strain ATCC 23365 / NCTC 10854 / RM-666).